The following is a 1123-amino-acid chain: Alpha-mannosidase E (1123 aa).

The first 21 residues, 1 to 21 (MNKTKLIKIIFVIGVWILLST), serve as a signal peptide directing secretion. Residues Asn2 and Asn38 are each glycosylated (N-linked (GlcNAc...) asparagine). The Extracellular portion of the chain corresponds to 22-1072 (FIINIYNENF…KYNRPNHLAL (1051 aa)). Zn(2+)-binding residues include His67 and Asp69. Residue Asn140 is glycosylated (N-linked (GlcNAc...) asparagine). Residues Asp150 and His409 each contribute to the Zn(2+) site. The active-site Nucleophile is the Asp150. N-linked (GlcNAc...) asparagine glycans are attached at residues Asn521, Asn675, Asn858, Asn887, Asn975, and Asn990. Residues 1073 to 1093 (ILSLSIGTPAGILIIVIALVV) form a helical membrane-spanning segment. Over 1094–1123 (IYKKRKNRKTLTSSYSLLNLILKDRADSSP) the chain is Cytoplasmic.

It belongs to the glycosyl hydrolase 38 family. Requires Zn(2+) as cofactor.

Its subcellular location is the membrane. The enzyme catalyses Hydrolysis of terminal, non-reducing alpha-D-mannose residues in alpha-D-mannosides.. This is Alpha-mannosidase E (manE) from Dictyostelium discoideum (Social amoeba).